Here is a 290-residue protein sequence, read N- to C-terminus: Probable 2-(5''-triphosphoribosyl)-3'-dephosphocoenzyme-A synthase (290 aa).

This sequence belongs to the CitG/MdcB family.

It catalyses the reaction 3'-dephospho-CoA + ATP = 2'-(5''-triphospho-alpha-D-ribosyl)-3'-dephospho-CoA + adenine. Its function is as follows. Involved in the formation of 2-(5''-phosphoribosyl)-3'-dephosphocoenzyme-A, the prosthetic group of the acyl-carrier protein of the malonate decarboxylase. The polypeptide is Probable 2-(5''-triphosphoribosyl)-3'-dephosphocoenzyme-A synthase (Stutzerimonas stutzeri (strain A1501) (Pseudomonas stutzeri)).